The following is a 491-amino-acid chain: PE-PGRS family protein PE_PGRS26 (491 aa).

Residues 1–93 (MSNVMVVPGM…VGSYAAAEAA (93 aa)) enclose the PE domain. Composition is skewed to gly residues over residues 207 to 221 (NGGT…GGGL) and 229 to 238 (GGNGGGGDAG). Disordered regions lie at residues 207–238 (NGGT…GDAG), 255–275 (DGGA…ARGG), and 444–491 (AGGN…GKHG). Residues 444–485 (AGGNGGDGGPSQGGGNPGFGGDGGTGGPGGVGVPDGIGGANG) are compositionally biased toward gly residues.

It belongs to the mycobacterial PE family. PGRS subfamily.

It localises to the cell surface. The sequence is that of PE-PGRS family protein PE_PGRS26 from Mycobacterium tuberculosis (strain ATCC 25618 / H37Rv).